We begin with the raw amino-acid sequence, 197 residues long: Imidazoleglycerol-phosphate dehydratase (197 aa).

It belongs to the imidazoleglycerol-phosphate dehydratase family.

Its subcellular location is the cytoplasm. The enzyme catalyses D-erythro-1-(imidazol-4-yl)glycerol 3-phosphate = 3-(imidazol-4-yl)-2-oxopropyl phosphate + H2O. It participates in amino-acid biosynthesis; L-histidine biosynthesis; L-histidine from 5-phospho-alpha-D-ribose 1-diphosphate: step 6/9. This is Imidazoleglycerol-phosphate dehydratase from Leptospira biflexa serovar Patoc (strain Patoc 1 / Ames).